A 61-amino-acid polypeptide reads, in one-letter code: MNPKLCMLLLVCLMAFYVIETVQAKLTGECPAELEKECLNRRCASPCCKNNKCHCGCGRKK.

The first 24 residues, 1–24 (MNPKLCMLLLVCLMAFYVIETVQA), serve as a signal peptide directing secretion.

The protein belongs to the scoloptoxin-14 family. Contains 4 disulfide bonds. As to expression, expressed by the venom gland.

It localises to the secreted. The chain is U-scoloptoxin(14)-Sm1a from Scolopendra morsitans (Tanzanian blue ringleg centipede).